The primary structure comprises 196 residues: Peroxynitrite isomerase (196 aa).

The GXWXGXG signature appears at 46–52 (GVWRGRG). Histidine 186 is a binding site for heme b.

Belongs to the nitrobindin family. As to quaternary structure, homodimer. The cofactor is heme b.

The enzyme catalyses peroxynitrite = nitrate. It functions in the pathway nitrogen metabolism. Its function is as follows. Heme-binding protein able to scavenge peroxynitrite and to protect free L-tyrosine against peroxynitrite-mediated nitration, by acting as a peroxynitrite isomerase that converts peroxynitrite to nitrate. Therefore, this protein likely plays a role in peroxynitrite sensing and in the detoxification of reactive nitrogen and oxygen species (RNS and ROS, respectively). Is able to bind nitric oxide (NO) in vitro, but may act as a sensor of peroxynitrite levels in vivo. The polypeptide is Peroxynitrite isomerase (Salinispora tropica (strain ATCC BAA-916 / DSM 44818 / JCM 13857 / NBRC 105044 / CNB-440)).